Here is a 134-residue protein sequence, read N- to C-terminus: 6,7-dimethyl-8-ribityllumazine synthase (134 aa).

5-amino-6-(D-ribitylamino)uracil-binding positions include Phe-12, 44–46, and 68–70; these read VFD and SVI. 73–74 contacts (2S)-2-hydroxy-3-oxobutyl phosphate; sequence DT. The Proton donor role is filled by His-76. Residue Leu-101 participates in 5-amino-6-(D-ribitylamino)uracil binding. Residue Arg-116 coordinates (2S)-2-hydroxy-3-oxobutyl phosphate.

It belongs to the DMRL synthase family.

It carries out the reaction (2S)-2-hydroxy-3-oxobutyl phosphate + 5-amino-6-(D-ribitylamino)uracil = 6,7-dimethyl-8-(1-D-ribityl)lumazine + phosphate + 2 H2O + H(+). It functions in the pathway cofactor biosynthesis; riboflavin biosynthesis; riboflavin from 2-hydroxy-3-oxobutyl phosphate and 5-amino-6-(D-ribitylamino)uracil: step 1/2. Its function is as follows. Catalyzes the formation of 6,7-dimethyl-8-ribityllumazine by condensation of 5-amino-6-(D-ribitylamino)uracil with 3,4-dihydroxy-2-butanone 4-phosphate. This is the penultimate step in the biosynthesis of riboflavin. The protein is 6,7-dimethyl-8-ribityllumazine synthase of Methanosarcina barkeri (strain Fusaro / DSM 804).